The chain runs to 2174 residues: Mediator of RNA polymerase II transcription subunit 13 (2174 aa).

Ser-395 carries the phosphoserine modification. Residues 435-477 (RNAGQQGQAPSLGQQQQILPKHKTNEKQEKSEKPQKRPLTPFH) form a disordered region. Low complexity predominate over residues 438–451 (GQQGQAPSLGQQQQ). A compositionally biased stretch (basic and acidic residues) spans 457–469 (KTNEKQEKSEKPQ). Ser-500, Ser-504, Ser-530, and Ser-537 each carry phosphoserine. A compositionally biased stretch (basic and acidic residues) spans 709-730 (FPDKKDRQNSEREAGKKHKVED). Disordered regions lie at residues 709–735 (FPDKKDRQNSEREAGKKHKVEDGTSSV), 749–769 (SPSIKQDAPRPTSHARPPSTS), and 787–816 (FNSDEDELTPGSKKSANGSDDKASCKESKT). The span at 805 to 815 (SDDKASCKESK) shows a compositional bias: basic and acidic residues. Ser-826 and Ser-890 each carry phosphoserine. A disordered region spans residues 959–1054 (FIKEGDGSNM…ASTPSTCRPL (96 aa)). Low complexity predominate over residues 992–1003 (PPSNSGAGILPS). Residues 1004–1015 (PSTPRFPTPRTP) are compositionally biased toward pro residues. The residue at position 1029 (Ser-1029) is a Phosphoserine. Positions 1040–1053 (DLYSPASTPSTCRP) are enriched in polar residues. Short sequence motifs (LXXLL motif) lie at residues 1188–1192 (LILLL) and 1279–1283 (LRMLL). 2 stretches are compositionally biased toward polar residues: residues 1484–1498 (SQSLITPPQMTNTGN) and 1563–1606 (SMNS…SLPT). Disordered stretches follow at residues 1484 to 1505 (SQSLITPPQMTNTGNANTPSAT), 1557 to 1617 (SFPP…ESTM), and 2015 to 2048 (LPASPTGSPVHSPGSHYPHGGDAGKGQSTDRLLS).

It belongs to the Mediator complex subunit 13 family. Component of the Mediator complex, which is composed of MED1, MED4, MED6, MED7, MED8, MED9, MED10, MED11, MED12, MED13, MED13L, MED14, MED15, MED16, MED17, MED18, MED19, MED20, MED21, MED22, MED23, MED24, MED25, MED26, MED27, MED29, MED30, MED31, CCNC, CDK8 and CDC2L6/CDK11. The MED12, MED13, CCNC and CDK8 subunits form a distinct module termed the CDK8 module. Mediator containing the CDK8 module is less active than Mediator lacking this module in supporting transcriptional activation. Individual preparations of the Mediator complex lacking one or more distinct subunits have been variously termed ARC, CRSP, DRIP, PC2, SMCC and TRAP. As to expression, ubiquitous.

The protein localises to the nucleus. In terms of biological role, component of the Mediator complex, a coactivator involved in the regulated transcription of nearly all RNA polymerase II-dependent genes. Mediator functions as a bridge to convey information from gene-specific regulatory proteins to the basal RNA polymerase II transcription machinery. Mediator is recruited to promoters by direct interactions with regulatory proteins and serves as a scaffold for the assembly of a functional preinitiation complex with RNA polymerase II and the general transcription factors. The polypeptide is Mediator of RNA polymerase II transcription subunit 13 (Homo sapiens (Human)).